Consider the following 665-residue polypeptide: Secreted LysM effector Lys3 (665 aa).

The N-terminal stretch at 1–19 (MLWLTVSLTGFALLGVVAA) is a signal peptide. Asn43 and Asn153 each carry an N-linked (GlcNAc...) asparagine glycan. LysM domains follow at residues 166–211 (RTYT…TLCL), 216–264 (TLRK…YICI), and 303–349 (KWYV…AYCV). Asn234 carries N-linked (GlcNAc...) asparagine glycosylation. Residue Asn398 is glycosylated (N-linked (GlcNAc...) asparagine). Positions 409–454 (SWSDAAKLNSCSFIAHINGVTVSQLLQWNPSLSKDSCSLSRELYYC) constitute a LysM 4 domain. N-linked (GlcNAc...) asparagine glycosylation occurs at Asn531. The segment at 585–610 (SSVSMTNSAPATATSTGGPPAPTQDG) is disordered. Over residues 592 to 602 (SAPATATSTGG) the composition is skewed to low complexity. N-linked (GlcNAc...) asparagine glycosylation occurs at Asn614. One can recognise a LysM 5 domain in the interval 617 to 663 (KWHVVESGDGCWAIYTKYGITSDQLFEWNTKISKDCSNIWLGYAVCV).

This sequence belongs to the secreted LysM effector family.

Its function is as follows. Might have a role in sequestration of chitin oligosaccharides (breakdown products of fungal cell walls that are released during invasion and act as triggers of host immunity) to dampen host defense. The sequence is that of Secreted LysM effector Lys3 from Pochonia chlamydosporia (strain 123) (Metacordyceps chlamydosporia).